The following is a 107-amino-acid chain: UPF0145 protein Sfri_2095 (107 aa).

Belongs to the UPF0145 family.

The protein is UPF0145 protein Sfri_2095 of Shewanella frigidimarina (strain NCIMB 400).